The chain runs to 447 residues: GTPase Der (447 aa).

EngA-type G domains follow at residues proline 3–aspartate 167 and isoleucine 180–asparagine 353. GTP contacts are provided by residues glycine 9 to serine 16, aspartate 56 to phenylalanine 60, asparagine 119 to glutamate 122, glycine 186 to serine 193, aspartate 233 to leucine 237, and asparagine 298 to aspartate 301. Residues arginine 354–histidine 438 form the KH-like domain.

It belongs to the TRAFAC class TrmE-Era-EngA-EngB-Septin-like GTPase superfamily. EngA (Der) GTPase family. As to quaternary structure, associates with the 50S ribosomal subunit.

Its function is as follows. GTPase that plays an essential role in the late steps of ribosome biogenesis. This Polaromonas sp. (strain JS666 / ATCC BAA-500) protein is GTPase Der.